The primary structure comprises 416 residues: Caspase-9 (416 aa).

Positions 1-92 (MDEADRRLLR…DMLASFLRTN (92 aa)) constitute a CARD domain. Thr125 carries the post-translational modification Phosphothreonine; by MAPK1. Phosphotyrosine; by ABL1 is present on Tyr153. Residues His237 and Cys287 contribute to the active site. Residues 294-320 (HGFEVASTSPEDESPGSNPEPDATPFQ) form a disordered region. Phosphoserine occurs at positions 302, 307, and 310. The propeptide occupies 316–330 (ATPFQEGLRTFDQLD). Position 355 is a (Microbial infection) ADP-riboxanated arginine (Arg355).

The protein belongs to the peptidase C14A family. Heterotetramer that consists of two anti-parallel arranged heterodimers, each one formed by a 35 kDa (p35) and a 10 kDa (p10) subunit. Caspase-9 and APAF1 bind to each other via their respective NH2-terminal CED-3 homologous domains in the presence of cytochrome C and ATP. Interacts (inactive form) with EFHD2. Interacts with HAX1. Interacts with BIRC2/c-IAP1, XIAP/BIRC4, BIRC5/survivin, BIRC6/bruce and BIRC7/livin. Interacts with ABL1 (via SH3 domain); the interaction is direct and increases in the response of cells to genotoxic stress and ABL1/c-Abl activation. Interacts with BCL2L10. Interacts with NleF from pathogenic E.coli. Cleavages at Asp-315 by granzyme B and at Asp-330 by caspase-3 generate the two active subunits. Caspase-8 and -10 can also be involved in these processing events. In terms of processing, phosphorylated at Thr-125 by MAPK1/ERK2. Phosphorylation at Thr-125 is sufficient to block caspase-9 processing and subsequent caspase-3 activation. Phosphorylation on Tyr-153 by ABL1/c-Abl; occurs in the response of cells to DNA damage. Post-translationally, (Microbial infection) ADP-riboxanation by C.violaceum CopC blocks CASP9 processing, preventing CASP9 activation and ability to mediate intrinsic apoptosis. Ubiquitinated by BIRC6; this activity is inhibited by DIABLO/SMAC. In terms of tissue distribution, ubiquitous, with highest expression in the heart, moderate expression in liver, skeletal muscle, and pancreas. Low levels in all other tissues. Within the heart, specifically expressed in myocytes.

The enzyme catalyses Strict requirement for an Asp residue at position P1 and with a marked preference for His at position P2. It has a preferred cleavage sequence of Leu-Gly-His-Asp-|-Xaa.. Its activity is regulated as follows. Inhibited by the effector protein NleF that is produced by pathogenic E.coli; this inhibits apoptosis. Inhibited by BIRC6; following inhibition of BIRC6-caspase binding by DIABLO/SMAC, BIRC6 is subjected to caspase cleavage, leading to an increase in active caspases. Involved in the activation cascade of caspases responsible for apoptosis execution. Binding of caspase-9 to Apaf-1 leads to activation of the protease which then cleaves and activates effector caspases caspase-3 (CASP3) or caspase-7 (CASP7). Promotes DNA damage-induced apoptosis in a ABL1/c-Abl-dependent manner. Proteolytically cleaves poly(ADP-ribose) polymerase (PARP). Cleaves BIRC6 following inhibition of BIRC6-caspase binding by DIABLO/SMAC. In terms of biological role, lacks activity is an dominant-negative inhibitor of caspase-9. This is Caspase-9 (CASP9) from Homo sapiens (Human).